We begin with the raw amino-acid sequence, 198 residues long: TATA-box-binding protein (198 aa).

2 repeat units span residues 14–90 and 105–181.

This sequence belongs to the TBP family.

General factor that plays a role in the activation of archaeal genes transcribed by RNA polymerase. Binds specifically to the TATA box promoter element which lies close to the position of transcription initiation. The sequence is that of TATA-box-binding protein from Saccharolobus shibatae (strain ATCC 51178 / DSM 5389 / JCM 8931 / NBRC 15437 / B12) (Sulfolobus shibatae).